We begin with the raw amino-acid sequence, 386 residues long: Dual-specificity RNA methyltransferase RlmN (386 aa).

Glu94 functions as the Proton acceptor in the catalytic mechanism. The 242-residue stretch at 100 to 341 (EENRGTLCIS…VTTIRKTRGD (242 aa)) folds into the Radical SAM core domain. Cysteines 107 and 347 form a disulfide. Positions 114, 118, and 121 each coordinate [4Fe-4S] cluster. Residues 173–174 (GE), Ser205, 227–229 (SLH), and Asn304 contribute to the S-adenosyl-L-methionine site. The active-site S-methylcysteine intermediate is Cys347.

This sequence belongs to the radical SAM superfamily. RlmN family. It depends on [4Fe-4S] cluster as a cofactor.

The protein resides in the cytoplasm. It carries out the reaction adenosine(2503) in 23S rRNA + 2 reduced [2Fe-2S]-[ferredoxin] + 2 S-adenosyl-L-methionine = 2-methyladenosine(2503) in 23S rRNA + 5'-deoxyadenosine + L-methionine + 2 oxidized [2Fe-2S]-[ferredoxin] + S-adenosyl-L-homocysteine. The catalysed reaction is adenosine(37) in tRNA + 2 reduced [2Fe-2S]-[ferredoxin] + 2 S-adenosyl-L-methionine = 2-methyladenosine(37) in tRNA + 5'-deoxyadenosine + L-methionine + 2 oxidized [2Fe-2S]-[ferredoxin] + S-adenosyl-L-homocysteine. In terms of biological role, specifically methylates position 2 of adenine 2503 in 23S rRNA and position 2 of adenine 37 in tRNAs. m2A2503 modification seems to play a crucial role in the proofreading step occurring at the peptidyl transferase center and thus would serve to optimize ribosomal fidelity. The chain is Dual-specificity RNA methyltransferase RlmN from Herminiimonas arsenicoxydans.